Reading from the N-terminus, the 235-residue chain is MSGSDTSGSVHVDEHGHGKASSSYDGAGAPAPAPAPFQGHRKAGSGSSDVPFLLRSGGSGGDGLRRCLGLIDFVLRVAAFGPTLAAAISIGTSDERLSVFTNYFQFRARFDDFPAFEFFIVANAIAAGYMVLSLPFSAATIMSSKATGVKLLLLICDTIMVGLLTAAASAAAAMVYVAHEGNLRANWVPICLQFHGFCQRTSGAVIASFLAVFVLMVLIVMAAFTMPRRTHHTAS.

The segment at 1–46 is disordered; that stretch reads MSGSDTSGSVHVDEHGHGKASSSYDGAGAPAPAPAPFQGHRKAGSG. Residues 1 to 67 are Cytoplasmic-facing; sequence MSGSDTSGSV…GSGGDGLRRC (67 aa). The chain crosses the membrane as a helical span at residues 68 to 88; it reads LGLIDFVLRVAAFGPTLAAAI. Topologically, residues 89 to 115 are extracellular; the sequence is SIGTSDERLSVFTNYFQFRARFDDFPA. A helical membrane pass occupies residues 116 to 136; the sequence is FEFFIVANAIAAGYMVLSLPF. At 137–150 the chain is on the cytoplasmic side; it reads SAATIMSSKATGVK. A helical membrane pass occupies residues 151–171; the sequence is LLLLICDTIMVGLLTAAASAA. Residues 172-203 are Extracellular-facing; the sequence is AAMVYVAHEGNLRANWVPICLQFHGFCQRTSG. A helical transmembrane segment spans residues 204 to 224; the sequence is AVIASFLAVFVLMVLIVMAAF. The Cytoplasmic portion of the chain corresponds to 225–235; that stretch reads TMPRRTHHTAS.

It belongs to the Casparian strip membrane proteins (CASP) family. Homodimer and heterodimers.

Its subcellular location is the cell membrane. Regulates membrane-cell wall junctions and localized cell wall deposition. Required for establishment of the Casparian strip membrane domain (CSD) and the subsequent formation of Casparian strips, a cell wall modification of the root endodermis that determines an apoplastic barrier between the intraorganismal apoplasm and the extraorganismal apoplasm and prevents lateral diffusion. The polypeptide is Casparian strip membrane protein 2 (Oryza sativa subsp. indica (Rice)).